The chain runs to 340 residues: MRIIYKQQTMNNNRRDFIKKLGIATAAIAINPLEAKNLLDTSEPKTTNKPIVLSTWNFGLHANVEAWKVLSKGGKALDAVEKGVRLVEDDPTERSVGYGGRPDRDGRVTLDACIMDENYNIGSVACMEHIKNPISVARAVMEKTPHVMLVGDGALEFALSQGFKKENLLTAESEKEWKEWLKTSQYKPIVNIENHDTIGMIALDAQGNLSGACTTSGMAYKMHGRVGDSPIIGAGLFVDNEIGAATATGHGEEVIRTVGTHLVVELMNQGRTPQQACKEAVERIVKIVNRRGKNLKDIQVGFIALNKKGEYGAYCIQDGFNFAVHDQKGNRLETPGFALK.

Positions 1–45 (MRIIYKQQTMNNNRRDFIKKLGIATAAIAINPLEAKNLLDTSEPK) are cleaved as a signal peptide. The active-site Nucleophile is the threonine 197. Substrate contacts are provided by residues 225–228 (RVGD) and 248–251 (TGHG).

Belongs to the Ntn-hydrolase family. In terms of assembly, heterotetramer of two alpha and two beta chains arranged as a dimer of alpha/beta heterodimers. In terms of processing, cleaved into an alpha and beta chain by autocatalysis; this activates the enzyme. The N-terminal residue of the beta subunit is responsible for the nucleophile hydrolase activity.

It is found in the periplasm. The catalysed reaction is N(4)-(beta-N-acetyl-D-glucosaminyl)-L-asparagine + H2O = N-acetyl-beta-D-glucosaminylamine + L-aspartate + H(+). Functionally, cleaves the GlcNAc-Asn bond which joins oligosaccharides to the peptide of asparagine-linked glycoproteins. Requires that the glycosylated asparagine moiety is not substituted on its N-(R1) and C- (R2) terminus. The polypeptide is N(4)-(Beta-N-acetylglucosaminyl)-L-asparaginase (Elizabethkingia miricola (Chryseobacterium miricola)).